Reading from the N-terminus, the 259-residue chain is GTP cyclohydrolase FolE2 (259 aa).

The protein belongs to the GTP cyclohydrolase IV family.

The catalysed reaction is GTP + H2O = 7,8-dihydroneopterin 3'-triphosphate + formate + H(+). Its pathway is cofactor biosynthesis; 7,8-dihydroneopterin triphosphate biosynthesis; 7,8-dihydroneopterin triphosphate from GTP: step 1/1. Converts GTP to 7,8-dihydroneopterin triphosphate. This chain is GTP cyclohydrolase FolE2, found in Thermotoga petrophila (strain ATCC BAA-488 / DSM 13995 / JCM 10881 / RKU-1).